The chain runs to 712 residues: U11/U12 small nuclear ribonucleoprotein 48 kDa protein (712 aa).

A CHHC U11-48K-type zinc finger spans residues 98–125 (FVRCPFDSNHFMPPEALFLHSLRCPNTL). Residues Cys101, His107, His117, and Cys121 each coordinate Zn(2+). The interval 562-712 (QSRSPIGNDQ…EDRYIPTEKE (151 aa)) is disordered. 5 stretches are compositionally biased toward basic and acidic residues: residues 585–595 (KQWKGENRADI), 603–614 (QNSDKVKRHDEY), 629–663 (KHSDRRDDKLRDRRKDKHNDRRDDEFTRTKRHSIE), 672–693 (SSREKSSSDYKTKRDDPYDRRS), and 702–712 (FEDRYIPTEKE).

As to quaternary structure, component of the U11/U12 snRNPs that are part of the U12-type spliceosome. Not found in the major spliceosome.

It is found in the nucleus. Functionally, likely involved in U12-type 5' splice site recognition. This Arabidopsis thaliana (Mouse-ear cress) protein is U11/U12 small nuclear ribonucleoprotein 48 kDa protein (SNRNP48).